An 81-amino-acid polypeptide reads, in one-letter code: Cytotoxin 2 (81 aa).

Residues 1–21 form the signal peptide; that stretch reads MKTLLLTLVVVTIVCLDLGYT. Intrachain disulfides connect Cys24–Cys42, Cys35–Cys59, Cys63–Cys74, and Cys75–Cys80.

The protein belongs to the three-finger toxin family. Short-chain subfamily. Type IA cytotoxin sub-subfamily. As to quaternary structure, monomer in solution; Homodimer and oligomer in the presence of negatively charged lipids forming a pore with a size ranging between 20 and 30 Angstroms. Expressed by the venom gland.

It is found in the secreted. Its subcellular location is the target cell membrane. Shows cytolytic activity on many different cells by forming pore in lipid membranes. In vivo, increases heart rate or kills the animal by cardiac arrest. In addition, it binds to heparin with high affinity, interacts with Kv channel-interacting protein 1 (KCNIP1) in a calcium-independent manner, and binds to integrin alpha-V/beta-3 (ITGAV/ITGB3) with moderate affinity. The protein is Cytotoxin 2 of Naja kaouthia (Monocled cobra).